We begin with the raw amino-acid sequence, 195 residues long: Large ribosomal subunit protein mL58 (195 aa).

Residues 1-18 constitute a mitochondrion transit peptide; sequence MIGRGVCCRSFHTAGSAW.

The protein belongs to the mitochondrion-specific ribosomal protein mL58 family. As to quaternary structure, component of the mitochondrial large ribosomal subunit (mt-LSU). Mature yeast 74S mitochondrial ribosomes consist of a small (37S) and a large (54S) subunit. The 37S small subunit contains a 15S ribosomal RNA (15S mt-rRNA) and 34 different proteins. The 54S large subunit contains a 21S rRNA (21S mt-rRNA) and 46 different proteins.

The protein localises to the mitochondrion. In terms of biological role, component of the mitochondrial ribosome (mitoribosome), a dedicated translation machinery responsible for the synthesis of mitochondrial genome-encoded proteins, including at least some of the essential transmembrane subunits of the mitochondrial respiratory chain. The mitoribosomes are attached to the mitochondrial inner membrane and translation products are cotranslationally integrated into the membrane. This chain is Large ribosomal subunit protein mL58 (MRPL20), found in Saccharomyces cerevisiae (strain ATCC 204508 / S288c) (Baker's yeast).